A 507-amino-acid chain; its full sequence is Beta-glucosidase 3 (507 aa).

An N-terminal signal peptide occupies residues 1-23 (MELTLSLLTIFLLFFALSGRCSD). Gln-41 contributes to the a beta-D-glucoside binding site. Asn-64 is a glycosylation site (N-linked (GlcNAc...) asparagine). A beta-D-glucoside is bound by residues His-138 and 183 to 184 (NE). The active-site Proton donor is Glu-184. Cysteines 203 and 210 form a disulfide. 2 N-linked (GlcNAc...) asparagine glycosylation sites follow: Asn-209 and Asn-214. Tyr-326 contacts a beta-D-glucoside. An N-linked (GlcNAc...) asparagine glycan is attached at Asn-361. An a beta-D-glucoside-binding site is contributed by Glu-394. Glu-394 serves as the catalytic Nucleophile. Residue Asn-429 is glycosylated (N-linked (GlcNAc...) asparagine). Positions 439 and 455 each coordinate a beta-D-glucoside. 3 N-linked (GlcNAc...) asparagine glycosylation sites follow: Asn-461, Asn-485, and Asn-500.

This sequence belongs to the glycosyl hydrolase 1 family.

It catalyses the reaction Hydrolysis of terminal, non-reducing beta-D-glucosyl residues with release of beta-D-glucose.. The chain is Beta-glucosidase 3 from Arabidopsis thaliana (Mouse-ear cress).